The primary structure comprises 215 residues: Vesicle-trafficking protein SEC22b-B (215 aa).

The Cytoplasmic segment spans residues 1–190 (MVLLTMIARL…RSDAKYLNTR (190 aa)). Residues 6 to 119 (MIARLADGLP…YSFIEFDTYI (114 aa)) enclose the Longin domain. A v-SNARE coiled-coil homology domain is found at 134–194 (NLSNINTELQ…KYLNTRSTYA (61 aa)). Residues 191 to 213 (STYAKLAAGGVFFIMLIVYIRFW) traverse the membrane as a helical segment. The Lumenal portion of the chain corresponds to 214-215 (WL).

It belongs to the synaptobrevin family. In terms of assembly, component of 2 distinct SNARE complexes.

It localises to the endoplasmic reticulum membrane. Its subcellular location is the endoplasmic reticulum-Golgi intermediate compartment membrane. The protein localises to the golgi apparatus. It is found in the cis-Golgi network membrane. The protein resides in the trans-Golgi network membrane. It localises to the melanosome. In terms of biological role, SNARE involved in targeting and fusion of ER-derived transport vesicles with the Golgi complex as well as Golgi-derived retrograde transport vesicles with the ER. The chain is Vesicle-trafficking protein SEC22b-B from Danio rerio (Zebrafish).